We begin with the raw amino-acid sequence, 251 residues long: MSFTVVIPARYQSTRLPGKPLADIAGKPMVQWVYEQAIQAGAQDVIIATDDQRVADAVAVFGGKVCMTSPNHESGTERLAEVVQLMGIADDHIVVNVQGDEPLIPPSIIRQVAENLAASSAPMATLGVAITSEEEVFNPNAVKVVTDKEGYALYFSRATIPWDRDAFARGEVLTEHSLMRHIGIYAYRAGFINTYVNWQPSSLEKIECLEQLRVLWYGEKIHVELAKEAPPAGVDTPEDLELVRELIAAKS.

This sequence belongs to the KdsB family.

It localises to the cytoplasm. It catalyses the reaction 3-deoxy-alpha-D-manno-oct-2-ulosonate + CTP = CMP-3-deoxy-beta-D-manno-octulosonate + diphosphate. It functions in the pathway nucleotide-sugar biosynthesis; CMP-3-deoxy-D-manno-octulosonate biosynthesis; CMP-3-deoxy-D-manno-octulosonate from 3-deoxy-D-manno-octulosonate and CTP: step 1/1. It participates in bacterial outer membrane biogenesis; lipopolysaccharide biosynthesis. In terms of biological role, activates KDO (a required 8-carbon sugar) for incorporation into bacterial lipopolysaccharide in Gram-negative bacteria. The polypeptide is 3-deoxy-manno-octulosonate cytidylyltransferase (Vibrio vulnificus (strain CMCP6)).